The chain runs to 513 residues: MQLNSTEISALIKQRIEKFNVASEARNEGTIVSVSDGIIRIHGLADVMQGEMIELPGGRFALALNLERDSVGAVVMGPYANLQEGMKVTGTGRILEVPVGPALLGRVVNTLGEPIDGKGPIETETFSPVEVIAPGVIERKSVDQPVQTGYKAVDSMIPIGRGQRELIIGDRQTGKTAMAIDAIINQKQSGIYSVYVAIGQKASTIANVVRKLEEHGALDNTIVVVASASEAAALQYLAPYSGCAMGEYFRDRGEDALIVYDDLSKQAVAYRQISLLLKRPPGREAFPGDVFYLHSRLLERASRVSENYVEKFTNGEVKGKTGSLTALPIIETQAGDVSAFVPTNVISITDGQIFLQTELFNAGIRPAVDPGISVSRVGGSAQTKIIKKLSGGIRTALAQYRELAAFAQFSSDLDEATKKQLDHGQKVTELMKQKQYAPMSVFEQAVVIFSAERGYLVDVELAKLADFEAALLSYAKGQSAELVSQIDETGAWNSEIEAQFVKLVEDFKATQTW.

Position 169 to 176 (169 to 176) interacts with ATP; the sequence is GDRQTGKT.

It belongs to the ATPase alpha/beta chains family. F-type ATPases have 2 components, CF(1) - the catalytic core - and CF(0) - the membrane proton channel. CF(1) has five subunits: alpha(3), beta(3), gamma(1), delta(1), epsilon(1). CF(0) has three main subunits: a(1), b(2) and c(9-12). The alpha and beta chains form an alternating ring which encloses part of the gamma chain. CF(1) is attached to CF(0) by a central stalk formed by the gamma and epsilon chains, while a peripheral stalk is formed by the delta and b chains.

Its subcellular location is the cell inner membrane. It carries out the reaction ATP + H2O + 4 H(+)(in) = ADP + phosphate + 5 H(+)(out). Its function is as follows. Produces ATP from ADP in the presence of a proton gradient across the membrane. The alpha chain is a regulatory subunit. This is ATP synthase subunit alpha 1 from Photobacterium profundum (strain SS9).